We begin with the raw amino-acid sequence, 60 residues long: Protein P7 (60 aa).

Residues 28–48 (FIGVTLIGMFISYYLYALISI) form a helical membrane-spanning segment.

It localises to the host membrane. In Vitis vinifera (Grape), this protein is Protein P7.